The chain runs to 202 residues: Ribosome maturation factor RimM (202 aa).

In terms of domain architecture, PRC barrel spans Lys121–Tyr202.

This sequence belongs to the RimM family. As to quaternary structure, binds ribosomal protein uS19.

Its subcellular location is the cytoplasm. Functionally, an accessory protein needed during the final step in the assembly of 30S ribosomal subunit, possibly for assembly of the head region. Essential for efficient processing of 16S rRNA. May be needed both before and after RbfA during the maturation of 16S rRNA. It has affinity for free ribosomal 30S subunits but not for 70S ribosomes. The polypeptide is Ribosome maturation factor RimM (Polaromonas sp. (strain JS666 / ATCC BAA-500)).